We begin with the raw amino-acid sequence, 177 residues long: Parathyroid hormone-related protein (177 aa).

A signal peptide spans 1–24 (MLRRLVQQWGVAVFLLSYSVPSCG). Positions 25–34 (RSVEELGRRL) are excised as a propeptide. Residues 57–68 (RFFLHHLIAEIH) are important for receptor binding. The segment at 74–177 (ATSEVSPNSK…TSLELNLRRH (104 aa)) is disordered. A compositionally biased stretch (polar residues) spans 76-90 (SEVSPNSKPAPNTKN). A Nuclear localization signal motif is present at residues 108–129 (TNKVETYKEQPLKTPGKKKKGK). Over residues 109 to 118 (NKVETYKEQP) the composition is skewed to basic and acidic residues. Over residues 122–132 (PGKKKKGKPGK) the composition is skewed to basic residues.

Belongs to the parathyroid hormone family. In terms of assembly, PTHrP interacts with PTH1R (via N-terminal extracellular domain). There are several secretory forms, including osteostatin, arising from endoproteolytic cleavage of the initial translation product. Each of these secretory forms is believed to have one or more of its own receptors that mediates the normal paracrine, autocrine and endocrine actions.

It is found in the secreted. The protein resides in the cytoplasm. Its subcellular location is the nucleus. Its function is as follows. Neuroendocrine peptide which is a critical regulator of cellular and organ growth, development, migration, differentiation and survival and of epithelial calcium ion transport. Acts by binding to its receptor, PTH1R, activating G protein-coupled receptor signaling. Regulates endochondral bone development and epithelial-mesenchymal interactions during the formation of the mammary glands and teeth. Required for skeletal homeostasis. Promotes mammary mesenchyme differentiation and bud outgrowth by modulating mesenchymal cell responsiveness to BMPs. Up-regulates BMPR1A expression in the mammary mesenchyme and this increases the sensitivity of these cells to BMPs and allows them to respond to BMP4 in a paracrine and/or autocrine fashion. BMP4 signaling in the mesenchyme, in turn, triggers epithelial outgrowth and augments MSX2 expression, which causes the mammary mesenchyme to inhibit hair follicle formation within the nipple sheath. Functionally, potent inhibitor of osteoclastic bone resorption. The polypeptide is Parathyroid hormone-related protein (PTHLH) (Canis lupus familiaris (Dog)).